The following is a 240-amino-acid chain: Large ribosomal subunit protein bL25 (240 aa).

Disordered regions lie at residues 1 to 21 and 204 to 240; these read MAENVLSAQKRTEQGKGPARR and GAAPAAGAAAPAGGAAPAAGAAPAKGGEAKGGDKAKK. Residues 204–229 show a composition bias toward low complexity; sequence GAAPAAGAAAPAGGAAPAAGAAPAKG. Residues 230-240 are compositionally biased toward basic and acidic residues; it reads GEAKGGDKAKK.

The protein belongs to the bacterial ribosomal protein bL25 family. CTC subfamily. Part of the 50S ribosomal subunit; part of the 5S rRNA/L5/L18/L25 subcomplex. Contacts the 5S rRNA. Binds to the 5S rRNA independently of L5 and L18.

Its function is as follows. This is one of the proteins that binds to the 5S RNA in the ribosome where it forms part of the central protuberance. This Anaeromyxobacter dehalogenans (strain 2CP-1 / ATCC BAA-258) protein is Large ribosomal subunit protein bL25.